We begin with the raw amino-acid sequence, 139 residues long: Acidic phospholipase A2 Tgc-E6 (139 aa).

The first 16 residues, 1 to 16 (MRTLWIMAVLLLGVEG), serve as a signal peptide directing secretion. 7 disulfides stabilise this stretch: C42–C132, C44–C60, C59–C111, C65–C139, C66–C104, C73–C97, and C91–C102. 3 residues coordinate Ca(2+): Y43, G45, and G47. Residue H63 is part of the active site. Residue D64 coordinates Ca(2+). Residue D105 is part of the active site.

The protein belongs to the phospholipase A2 family. Group II subfamily. D49 sub-subfamily. As to quaternary structure, monomer. Requires Ca(2+) as cofactor. Expressed by the venom gland.

The protein resides in the secreted. The catalysed reaction is a 1,2-diacyl-sn-glycero-3-phosphocholine + H2O = a 1-acyl-sn-glycero-3-phosphocholine + a fatty acid + H(+). Functionally, snake venom phospholipase A2 (PLA2) that inhibits the ADP-(IC(50)=272 nM) and collagen-induced (IC(50)=518 nM) human platelet aggregation in platelet rich plasma. Exhibits very high hydrolytic activities toward the synthetic lecithin, and prefers the anionic micelles (dPPC with deoxycholate) to the zwitterionic micelles (dPPC with Triton X-100). PLA2 catalyzes the calcium-dependent hydrolysis of the 2-acyl groups in 3-sn-phosphoglycerides. This Trimeresurus gracilis (Kikuchi habu) protein is Acidic phospholipase A2 Tgc-E6.